The primary structure comprises 439 residues: Apolipoprotein N-acyltransferase (439 aa).

Helical transmembrane passes span 13–33 (LLAG…FLVF), 47–67 (LFSF…IPLI), 75–95 (FIAY…QFGL), 97–117 (YLLW…YTLV), 149–169 (NAGT…FPLF), and 175–195 (IFSL…ETSY). One can recognise a CN hydrolase domain in the interval 207–439 (IQPFVPQDVK…GSRGILLFSF (233 aa)). Residue E248 is the Proton acceptor of the active site. The active site involves K305. The Nucleophile role is filled by C355.

Belongs to the CN hydrolase family. Apolipoprotein N-acyltransferase subfamily.

Its subcellular location is the cell inner membrane. The catalysed reaction is N-terminal S-1,2-diacyl-sn-glyceryl-L-cysteinyl-[lipoprotein] + a glycerophospholipid = N-acyl-S-1,2-diacyl-sn-glyceryl-L-cysteinyl-[lipoprotein] + a 2-acyl-sn-glycero-3-phospholipid + H(+). The protein operates within protein modification; lipoprotein biosynthesis (N-acyl transfer). Its function is as follows. Catalyzes the phospholipid dependent N-acylation of the N-terminal cysteine of apolipoprotein, the last step in lipoprotein maturation. This is Apolipoprotein N-acyltransferase from Aquifex aeolicus (strain VF5).